The primary structure comprises 450 residues: Salicylate synthase (450 aa).

Glutamate 252 serves as the catalytic Proton donor. 270–271 (GT) is a binding site for substrate. Glutamate 297 is a Mg(2+) binding site. Residues tyrosine 385, arginine 405, and 419–421 (GAG) contribute to the substrate site. Residues glutamate 431 and glutamate 434 each coordinate Mg(2+). Lysine 438 is a substrate binding site.

It belongs to the anthranilate synthase component I family. Salicylate synthase subfamily. In terms of assembly, monomer. It depends on Mg(2+) as a cofactor.

It catalyses the reaction chorismate = isochorismate. It carries out the reaction isochorismate = salicylate + pyruvate. The catalysed reaction is chorismate = prephenate. It participates in siderophore biosynthesis; mycobactin biosynthesis. Functionally, involved in the incorporation of salicylate into the virulence-conferring salicylate-based siderophore mycobactin. Catalyzes the initial conversion of chorismate to yield the intermediate isochorismate (isochorismate synthase activity), and the subsequent elimination of the enolpyruvyl side chain in a lyase reaction to give salicylate (isochorismate pyruvate-lyase activity). In the absence of magnesium, MbtI displays a chorismate mutase activity and converts chorismate to prephenate. The protein is Salicylate synthase (mbtI) of Mycobacterium bovis (strain ATCC BAA-935 / AF2122/97).